The sequence spans 751 residues: Photosystem I P700 chlorophyll a apoprotein A1 (751 aa).

8 helical membrane-spanning segments follow: residues 72-95 (IFSA…FHGA), 158-181 (LYCT…FHYH), 197-221 (MNHH…HVSL), 293-311 (TAHH…GHMY), 348-371 (WHAQ…HHMY), 387-413 (LSLF…IFMV), 435-457 (AIIS…LYVH), and 532-550 (FLVH…LILL). Cys-574 and Cys-583 together coordinate [4Fe-4S] cluster. The next 2 helical transmembrane spans lie at 590 to 611 (HVFL…HFSW) and 665 to 687 (LSAY…MFLF). Position 676 (His-676) interacts with chlorophyll a'. The chlorophyll a site is built by Met-684 and Tyr-692. Trp-693 provides a ligand contact to phylloquinone. A helical transmembrane segment spans residues 725–745 (AVGVTHYLLGGIVTTWAFFLA).

It belongs to the PsaA/PsaB family. As to quaternary structure, the PsaA/B heterodimer binds the P700 chlorophyll special pair and subsequent electron acceptors. PSI consists of a core antenna complex that captures photons, and an electron transfer chain that converts photonic excitation into a charge separation. The cyanobacterial PSI reaction center is composed of one copy each of PsaA,B,C,D,E,F,I,J,K,L,M and X, and forms trimeric complexes. PSI electron transfer chain: 5 chlorophyll a, 1 chlorophyll a', 2 phylloquinones and 3 4Fe-4S clusters. PSI core antenna: 90 chlorophyll a, 22 carotenoids, 3 phospholipids and 1 galactolipid. P700 is a chlorophyll a/chlorophyll a' dimer, A0 is one or more chlorophyll a, A1 is one or both phylloquinones and FX is a shared 4Fe-4S iron-sulfur center. is required as a cofactor.

It localises to the cellular thylakoid membrane. The catalysed reaction is reduced [plastocyanin] + hnu + oxidized [2Fe-2S]-[ferredoxin] = oxidized [plastocyanin] + reduced [2Fe-2S]-[ferredoxin]. In terms of biological role, psaA and PsaB bind P700, the primary electron donor of photosystem I (PSI), as well as the electron acceptors A0, A1 and FX. PSI is a plastocyanin/cytochrome c6-ferredoxin oxidoreductase, converting photonic excitation into a charge separation, which transfers an electron from the donor P700 chlorophyll pair to the spectroscopically characterized acceptors A0, A1, FX, FA and FB in turn. Oxidized P700 is reduced on the lumenal side of the thylakoid membrane by plastocyanin or cytochrome c6. This chain is Photosystem I P700 chlorophyll a apoprotein A1, found in Gloeothece citriformis (strain PCC 7424) (Cyanothece sp. (strain PCC 7424)).